The chain runs to 62 residues: Photosystem II reaction center protein Z (62 aa).

A run of 2 helical transmembrane segments spans residues 8–28 (ALVALVLVSFVLVVGVPVAYA) and 41–61 (WLGSGVWIALVLLVGLLNFFV).

Belongs to the PsbZ family. PSII is composed of 1 copy each of membrane proteins PsbA, PsbB, PsbC, PsbD, PsbE, PsbF, PsbH, PsbI, PsbJ, PsbK, PsbL, PsbM, PsbT, PsbX, PsbY, PsbZ, Psb30/Ycf12, peripheral proteins PsbO, CyanoQ (PsbQ), PsbU, PsbV and a large number of cofactors. It forms dimeric complexes.

Its subcellular location is the cellular thylakoid membrane. In terms of biological role, may control the interaction of photosystem II (PSII) cores with the light-harvesting antenna, regulates electron flow through the 2 photosystem reaction centers. PSII is a light-driven water plastoquinone oxidoreductase, using light energy to abstract electrons from H(2)O, generating a proton gradient subsequently used for ATP formation. This is Photosystem II reaction center protein Z from Nostoc sp. (strain PCC 7120 / SAG 25.82 / UTEX 2576).